The primary structure comprises 441 residues: Alpha-monoglucosyldiacylglycerol synthase (441 aa).

It belongs to the glycosyltransferase group 1 family. Glycosyltransferase 4 subfamily. Mg(2+) serves as cofactor.

It localises to the cell membrane. It carries out the reaction a 1,2-diacyl-sn-glycerol + UDP-alpha-D-glucose = a 1,2-diacyl-3-O-(alpha-D-glucopyranosyl)-sn-glycerol + UDP + H(+). Activated by the negatively charged lipid phosphatidylglycerol (PG). Functionally, glucosyltransferase involved in the biosynthesis of the non-bilayer-prone membrane lipid alpha-monoglucosyldiacylglycerol. This is a major component for maintaining a certain anionic lipid surface charge density, for balancing the bilayer to non-bilayer phase equilibria and for keeping a constant lipid bilayer spontaneous curvature (curvature packing stress). Catalyzes the transfer of a glucosyl residue from UDP-Glc to diacylglycerol (DAG) acceptor to form the corresponding alpha-glucosyl-DAG (1,2-diacyl-3-O-(alpha-D-glucopyranosyl)-sn-glycerol). It can only use UDP-Glc as sugar donor. The polypeptide is Alpha-monoglucosyldiacylglycerol synthase (Streptococcus pneumoniae (strain ATCC BAA-255 / R6)).